A 651-amino-acid polypeptide reads, in one-letter code: p-hydroxybenzoic acid efflux pump subunit AaeB (651 aa).

A run of 11 helical transmembrane segments spans residues 11-31, 41-61, 67-87, 91-111, 119-139, 150-170, 368-388, 405-425, 429-449, 460-480, and 481-501; these read FAFKLSFAIVAALFLGFHLQL, AAIVAAGPAFAAGGEPFSGAI, LRIIGTFIGCIGGLIIIVLTI, VLTLMLCCLWAGVCTWISSLV, FGLAGYTALIIIVTTGETPLL, EIVLGIVCAVMADLLFSPRSI, LFWLWTGWTSGAGCMVMIAVV, FLLGVIMALPIGALYFMFIIP, QSMLLLCISLGLLAFIIGIEV, LASTINIMVLSNPMEFNVSLF, and LDSALGQIVGCFVSLIVLLLI.

Belongs to the aromatic acid exporter ArAE (TC 2.A.85) family.

The protein resides in the cell inner membrane. In terms of biological role, forms an efflux pump with AaeA. Could function as a metabolic relief valve, allowing to eliminate certain compounds when they accumulate to high levels in the cell. In Yersinia enterocolitica serotype O:8 / biotype 1B (strain NCTC 13174 / 8081), this protein is p-hydroxybenzoic acid efflux pump subunit AaeB.